The sequence spans 285 residues: Acrosomal protein SP-10 (285 aa).

Residues 1–21 (MNMFLLLMSLYLLGSARGTSG) form the signal peptide. The segment at 64–200 (TLSEHGSSEH…GEQPSGAPIS (137 aa)) is disordered. Tandem repeats lie at residues 66-70 (SEHGS), 71-75 (SEHGS), 85-89 (PGEHA), 91-95 (SEHAS), 110-114 (VGEQP), 115-119 (SGEQP), 120-124 (SGEHL), 125-129 (SGEQS), 130-134 (LGEHA), 135-139 (SGEQP), 145-149 (SGEHA), 150-154 (SGEQP), 155-159 (SGEHA), 160-164 (SGEQP), 165-169 (SGEQP), 170-174 (SGEHA), 175-179 (SGEQS), 180-184 (LGEHA), and 190-194 (SGEQP). The interval 66–95 (SEHGSSEHGSREHTVAEHTPGEHAESEHAS) is 3 X 5 AA repeats of S-E-H-[GA]-A. Over residues 69-95 (GSSEHGSREHTVAEHTPGEHAESEHAS) the composition is skewed to basic and acidic residues. The segment at 85–184 (PGEHAESEHA…SGEQSLGEHA (100 aa)) is 7 X 5 AA repeats of S-G-E-H-[AL]. A 9 X 5 AA repeats of [SV]-G-E-Q-[PSA] region spans residues 110-194 (VGEQPSGEQP…LSEKPSGEQP (85 aa)). An N-linked (GlcNAc...) asparagine glycan is attached at asparagine 278.

Testis.

The protein localises to the cytoplasmic vesicle. It is found in the secretory vesicle. The protein resides in the acrosome. The chain is Acrosomal protein SP-10 (ACRV1) from Papio hamadryas (Hamadryas baboon).